The sequence spans 225 residues: 7-cyano-7-deazaguanine synthase (225 aa).

9-19 (LSGGLDSATCL) lines the ATP pocket. Positions 189, 199, 202, and 205 each coordinate Zn(2+).

This sequence belongs to the QueC family. Zn(2+) serves as cofactor.

The enzyme catalyses 7-carboxy-7-deazaguanine + NH4(+) + ATP = 7-cyano-7-deazaguanine + ADP + phosphate + H2O + H(+). It participates in purine metabolism; 7-cyano-7-deazaguanine biosynthesis. Catalyzes the ATP-dependent conversion of 7-carboxy-7-deazaguanine (CDG) to 7-cyano-7-deazaguanine (preQ(0)). The chain is 7-cyano-7-deazaguanine synthase from Dechloromonas aromatica (strain RCB).